The sequence spans 788 residues: Endonuclease MutS2 (788 aa).

332–339 (GPNTGGKT) is an ATP binding site. Residues 713–788 (VDLRGMDAEE…GTGVTVVEIK (76 aa)) form the Smr domain.

The protein belongs to the DNA mismatch repair MutS family. MutS2 subfamily. Homodimer. Binds to stalled ribosomes, contacting rRNA.

Endonuclease that is involved in the suppression of homologous recombination and thus may have a key role in the control of bacterial genetic diversity. Functionally, acts as a ribosome collision sensor, splitting the ribosome into its 2 subunits. Detects stalled/collided 70S ribosomes which it binds and splits by an ATP-hydrolysis driven conformational change. Acts upstream of the ribosome quality control system (RQC), a ribosome-associated complex that mediates the extraction of incompletely synthesized nascent chains from stalled ribosomes and their subsequent degradation. Probably generates substrates for RQC. In Clostridium botulinum (strain 657 / Type Ba4), this protein is Endonuclease MutS2.